The following is a 149-amino-acid chain: Large ribosomal subunit protein bL9 (149 aa).

This sequence belongs to the bacterial ribosomal protein bL9 family.

Binds to the 23S rRNA. This chain is Large ribosomal subunit protein bL9 (rplI), found in Geobacillus stearothermophilus (Bacillus stearothermophilus).